An 88-amino-acid polypeptide reads, in one-letter code: Small ribosomal subunit protein uS17 (88 aa).

It belongs to the universal ribosomal protein uS17 family. As to quaternary structure, part of the 30S ribosomal subunit.

Functionally, one of the primary rRNA binding proteins, it binds specifically to the 5'-end of 16S ribosomal RNA. The protein is Small ribosomal subunit protein uS17 of Pseudomonas putida (strain ATCC 700007 / DSM 6899 / JCM 31910 / BCRC 17059 / LMG 24140 / F1).